We begin with the raw amino-acid sequence, 739 residues long: Mitochondrial proton/calcium exchanger protein (739 aa).

The transit peptide at 1 to 115 directs the protein to the mitochondrion; sequence MASILLRSCR…RGWHSSRPVR (115 aa). Positions 115 to 136 form a coiled coil; it reads RDDSVVEKSLKSLKDKNKKLEE. At 116-208 the chain is on the mitochondrial intermembrane side; the sequence is DDSVVEKSLK…FLRICADLFR (93 aa). At threonine 192 the chain carries Phosphothreonine; by PINK1. A helical transmembrane segment spans residues 209 to 229; that stretch reads LVPFLVFVVVPFMEFLLPVAV. Topologically, residues 230-739 are mitochondrial matrix; it reads KLFPNMLPST…AEKEVAEVKS (510 aa). Positions 252–537 constitute a Letm1 RBD domain; that stretch reads KELRVKLELA…TAPVLEGLKE (286 aa). 2 coiled-coil regions span residues 462–490 and 537–627; these read NKAKLEATLQEEAAIQQEHREKELQKRSE and EEEI…SQLE. Lysine 597 bears the N6-acetyllysine mark. Residues 663-698 form the EF-hand domain; that stretch reads IPESKLTSLAAALDENKDGKVNIDDLVKVIELVDKE. Positions 676, 678, 680, 682, and 687 each coordinate Ca(2+). Residues 708–739 adopt a coiled-coil conformation; that stretch reads AEIVATLEKEEKVEEKEKAKEKAEKEVAEVKS. The interval 718 to 739 is disordered; sequence EKVEEKEKAKEKAEKEVAEVKS.

Belongs to the LETM1 family. In terms of assembly, homohexamer. Can form 2 complexes: a major (300 kDa) and a minor complex (500-600 kDa). Interacts with BCS1L. Interacts with GHITM. PINK1-mediated phosphorylation at Thr-192, positively regulates its mitochondrial calcium transport activity.

Its subcellular location is the mitochondrion inner membrane. The catalysed reaction is Ca(2+)(in) + 2 H(+)(out) = Ca(2+)(out) + 2 H(+)(in). The enzyme catalyses K(+)(in) + H(+)(out) = K(+)(out) + H(+)(in). Inhibited by ruthenium red or its derivative Ru360. In terms of biological role, plays an important role in maintenance of mitochondrial morphology and in mediating either calcium or potassium/proton antiport. Mediates proton-dependent calcium efflux from mitochondrion. Also functions as an electroneutral mitochondrial proton/potassium exchanger. Crucial for the maintenance of mitochondrial tubular networks and for the assembly of the supercomplexes of the respiratory chain. Required for the maintenance of the tubular shape and cristae organization. This Homo sapiens (Human) protein is Mitochondrial proton/calcium exchanger protein.